The following is an 89-amino-acid chain: UPF0223 protein BCG9842_B1176 (89 aa).

The protein belongs to the UPF0223 family.

This Bacillus cereus (strain G9842) protein is UPF0223 protein BCG9842_B1176.